The following is a 63-amino-acid chain: ATP synthase subunit epsilon, mitochondrial (63 aa).

In terms of assembly, F-type ATP synthases have 2 components, the catalytic core F(1) and the membrane-embedded component F(0), linked together by a central stalk and a peripheral stalk. The central stalk, also called rotor shaft, is often seen as part of F(1). The peripheral stalk is seen as part of F(0). F(0) contains the membrane channel next to the rotor. F-type ATP synthases form dimers but each monomer functions independently in ATP generation. The dimer consists of 18 different polypeptides: ATP1 (subunit alpha, part of F(1), 3 molecules per monomer), ATP2 (subunit beta, part of F(1), 3 molecules per monomer), ATP3 (subunit gamma, part of the central stalk), ATP4 (subunit b, part of the peripheral stalk), ATP5/OSCP (subunit 5/OSCP, part of the peripheral stalk), ATP6 (subunit a, part of the peripheral stalk), ATP7 (subunit d, part of the peripheral stalk), ATP8 (subunit 8, part of the peripheral stalk), OLI1 (subunit c, part of the rotor, 10 molecules per monomer), ATP14 (subunit h, part of the peripheral stalk), ATP15 (subunit epsilon, part of the central stalk), ATP16 (subunit delta, part of the central stalk), ATP17 (subunit f, part of the peripheral stalk), ATP18 (subunit i/j, part of the peripheral stalk). Dimer-specific subunits are ATP19 (subunit k, at interface between monomers), ATP20 (subunit g, at interface between monomers), TIM11 (subunit e, at interface between monomers). Also contains subunit L.

The protein localises to the mitochondrion inner membrane. Mitochondrial membrane ATP synthase (F(1)F(0) ATP synthase or Complex V) produces ATP from ADP in the presence of a proton gradient across the membrane which is generated by electron transport complexes of the respiratory chain. F-type ATP synthases consist of two structural domains, F(1) - containing the extramembraneous catalytic core, and F(0) - containing the membrane proton channel, linked together by a central stalk and a peripheral stalk. During catalysis, ATP synthesis in the catalytic domain of F(1) is coupled via a rotary mechanism of the central stalk subunits to proton translocation. Part of the complex F(1) domain and the central stalk which is part of the complex rotary element. Rotation of the central stalk against the surrounding alpha/ATP1(3)beta/ATP2(3) subunits leads to hydrolysis of ATP in three separate catalytic sites on the beta/ATP2 subunits. This Pichia angusta (Yeast) protein is ATP synthase subunit epsilon, mitochondrial.